The sequence spans 962 residues: MAHQGMDTALFERRLRPIYDNLEVGNNRKALQESEKLLRKHPSMLCARALKGLALLRLGRYEESHGCLQAVAEDKPTDDSTLQVLSFCYREMEQLNKIVELYQHAVKKNPGNEELLAHLFISYVRVEDYKAQQAVALQLYKAQPKNAYYFWSVISVVFQGIRGPESAVPEKRKIYLGLAQRMVEKHIREGKLESEQEAFLYLHILKLQKKFQEAWEFLTGELCAKLYPGAPVSMKFELLKVLGNWRELNELLQQLLDADRDRWDYYKEYIQSCFEILKLPITEGATEEKKFSLSACQEFLQGIIDSSERKKRGPYLARLELHQRMRAHQLPADQLIGDFDELVVEYFSLFADKSCCTHDIALFLPSVSMKQRQALANKLLLESGVSSTSLPMNKEQMQKHICALQISRMCGAHIDLPIDHLLAFYTALKLHYEHGRSTFGNKLLSTEMGPSDPYALLAANVMYDISLRENKSDYLFEALCLLQYVLRNSTSNFHVKLLSLKIYHMFGCLLGAQEMYEYLDIKQIQLDSMGYVHCQLLPLCGRFSGARNSYDTTMKFFTNSYKERLEYIALTYRFCTFSKMEEFLNFKERLTNSLQYVTCSLEAQICDLVSCYANVHQNLSTYTVMSIEPAEDRIAWHELSDNRDLDAIIRWDPLHQVDADAERKDSFDQEIEVLQLRSLMLRLYATFIDLYHPPPITKPSLSDGSKEETPAPAVESATSTLELLRDSWTGLYQRLRLMNYKPLPQQFLVNLLPTRLHLLLELPYERFFDDLAQLVLDLHSGAASLAAHCKKVGDNVIAVMELCVRTIEESNEWNNKDGLWKRRYQQQKVAASLEMLSLYAFLLSVLNDKLQVSSKTKVKKKQGDNKTQDTPQPVSEKERSQMVQELMRQLKHKLEACDAAIRTWKAPVLPRDLSSFMADMSLKPEVEATLIGDVSATFKDSHELMVTELRNLLKDKIRMVAK.

TPR repeat units follow at residues 45–78, 79–112, and 523–560; these read LCAR…KPTD, DSTL…NPGN, and QIQL…FTNS. Residues 856 to 880 form a disordered region; the sequence is TKVKKKQGDNKTQDTPQPVSEKERS.

The protein belongs to the MDM20/NAA25 family. In terms of assembly, component of the N-terminal acetyltransferase B (NatB) complex.

The protein resides in the lysosome. Functionally, non-catalytic subunit of the NatB complex which catalyzes acetylation of the N-terminal methionine residues of proteins beginning with Met-Asp or Met-Glu. Has 2 roles in the larval immune response: required both for the phagocytic degradation of internalized bacteria and for the induction of Defensin in the fat body. Within the phagocytic blood cells, has a role in detection of infection and activation of the humoral immune response. The chain is Phagocyte signaling-impaired protein from Drosophila pseudoobscura pseudoobscura (Fruit fly).